Consider the following 251-residue polypeptide: Transmembrane ascorbate-dependent reductase CYB561 (251 aa).

At Met-1 the chain carries N-acetylmethionine. The Cytoplasmic portion of the chain corresponds to 1 to 16 (MEGGAAAATPTALPYY). A helical membrane pass occupies residues 17–37 (VAFSQLLGLTLVAMTGAWLGL). A Cytochrome b561 domain is found at 19–220 (FSQLLGLTLV…FGGAVLYILT (202 aa)). Residues 38–51 (YRGGIAWESDLQFN) are Vesicular-facing. The chain crosses the membrane as a helical span at residues 52–72 (AHPLCMVIGLIFLQGNALLVY). Heme b contacts are provided by His-53, Arg-73, and Lys-80. The Cytoplasmic portion of the chain corresponds to 73–85 (RVFRNEAKRTTKV). Residues Lys-80 and Lys-84 each contribute to the L-ascorbate site. A helical transmembrane segment spans residues 86 to 106 (LHGLLHIFALVIALVGLVAVF). Heme b-binding positions include His-87, 116 to 119 (DLYS), and His-121. Over 107 to 124 (DYHRKKGYADLYSLHSWC) the chain is Vesicular. Residues 125-145 (GILVFVLYFVQWLVGFSFFLF) form a helical membrane-spanning segment. The Cytoplasmic portion of the chain corresponds to 146 to 158 (PGASFSLRSRYRP). Arg-153 is a binding site for L-ascorbate. Residues 159 to 179 (QHIFFGATIFLLSVGTALLGL) form a helical membrane-spanning segment. His-160 and Glu-181 together coordinate heme b. Over 180–198 (KEALLFNLGGKYSAFEPEG) the chain is Vesicular. Residues 199–219 (VLANVLGLLLACFGGAVLYIL) traverse the membrane as a helical segment. The Cytoplasmic segment spans residues 220-251 (TRADWKRPSQAEEQALSMDFKTLTEGDSPGSQ). Position 225 (Lys-225) interacts with heme b. At Ser-247 the chain carries Phosphoserine.

Heme b is required as a cofactor. As to expression, expressed in many tissues, in particular the brain especially in the cortex and hippocampus.

It localises to the cytoplasmic vesicle. The protein resides in the secretory vesicle. Its subcellular location is the chromaffin granule membrane. The enzyme catalyses monodehydro-L-ascorbate radical(out) + L-ascorbate(in) = monodehydro-L-ascorbate radical(in) + L-ascorbate(out). In terms of biological role, transmembrane reductase that uses ascorbate as an electron donor in the cytoplasm and transfers electrons across membranes to reduce monodehydro-L-ascorbate radical in the lumen of secretory vesicles. It is therefore involved the regeneration and homeostasis within secretory vesicles of ascorbate which in turn provides reducing equivalents needed to support the activity of intravesicular enzymes. The polypeptide is Transmembrane ascorbate-dependent reductase CYB561 (Homo sapiens (Human)).